Here is a 306-residue protein sequence, read N- to C-terminus: tRNA dimethylallyltransferase (306 aa).

6-13 (GPTASGKS) contacts ATP. 8 to 13 (TASGKS) lines the substrate pocket.

Belongs to the IPP transferase family. Monomer. Mg(2+) serves as cofactor.

The catalysed reaction is adenosine(37) in tRNA + dimethylallyl diphosphate = N(6)-dimethylallyladenosine(37) in tRNA + diphosphate. Functionally, catalyzes the transfer of a dimethylallyl group onto the adenine at position 37 in tRNAs that read codons beginning with uridine, leading to the formation of N6-(dimethylallyl)adenosine (i(6)A). The protein is tRNA dimethylallyltransferase of Sphingopyxis alaskensis (strain DSM 13593 / LMG 18877 / RB2256) (Sphingomonas alaskensis).